Here is a 198-residue protein sequence, read N- to C-terminus: Recombination protein RecR (198 aa).

The C4-type zinc finger occupies 56–71 (CKICHSLTENEICDIC). The Toprim domain maps to 79 to 174 (HLLCVVESPA…HMTRIAQGVP (96 aa)).

Belongs to the RecR family.

Its function is as follows. May play a role in DNA repair. It seems to be involved in an RecBC-independent recombinational process of DNA repair. It may act with RecF and RecO. The protein is Recombination protein RecR of Acinetobacter baylyi (strain ATCC 33305 / BD413 / ADP1).